The primary structure comprises 451 residues: Phosphoglucosamine mutase (451 aa).

Ser-103 functions as the Phosphoserine intermediate in the catalytic mechanism. Mg(2+) contacts are provided by Ser-103, Asp-243, Asp-245, and Asp-247. Ser-103 bears the Phosphoserine mark.

The protein belongs to the phosphohexose mutase family. Mg(2+) is required as a cofactor. In terms of processing, activated by phosphorylation.

It carries out the reaction alpha-D-glucosamine 1-phosphate = D-glucosamine 6-phosphate. Functionally, catalyzes the conversion of glucosamine-6-phosphate to glucosamine-1-phosphate. This is Phosphoglucosamine mutase from Limosilactobacillus reuteri subsp. reuteri (strain JCM 1112) (Lactobacillus reuteri).